The chain runs to 250 residues: Ribosomal RNA small subunit methyltransferase J (250 aa).

S-adenosyl-L-methionine-binding positions include 101-102, 117-118, 153-154, and Asp-171; these read RD, ER, and SS.

This sequence belongs to the methyltransferase superfamily. RsmJ family.

The protein resides in the cytoplasm. It catalyses the reaction guanosine(1516) in 16S rRNA + S-adenosyl-L-methionine = N(2)-methylguanosine(1516) in 16S rRNA + S-adenosyl-L-homocysteine + H(+). In terms of biological role, specifically methylates the guanosine in position 1516 of 16S rRNA. This chain is Ribosomal RNA small subunit methyltransferase J, found in Cronobacter sakazakii (strain ATCC BAA-894) (Enterobacter sakazakii).